The following is a 180-amino-acid chain: Adenine phosphoribosyltransferase (180 aa).

Belongs to the purine/pyrimidine phosphoribosyltransferase family. As to quaternary structure, homodimer.

The protein resides in the cytoplasm. It catalyses the reaction AMP + diphosphate = 5-phospho-alpha-D-ribose 1-diphosphate + adenine. It participates in purine metabolism; AMP biosynthesis via salvage pathway; AMP from adenine: step 1/1. Functionally, catalyzes a salvage reaction resulting in the formation of AMP, that is energically less costly than de novo synthesis. The protein is Adenine phosphoribosyltransferase of Pasteurella multocida (strain Pm70).